The sequence spans 339 residues: Methionine import ATP-binding protein MetN 2 (339 aa).

An ABC transporter domain is found at Ile2–Val241. Gly38 to Ser45 is an ATP binding site.

The protein belongs to the ABC transporter superfamily. Methionine importer (TC 3.A.1.24) family. In terms of assembly, the complex is composed of two ATP-binding proteins (MetN), two transmembrane proteins (MetI) and a solute-binding protein (MetQ).

It is found in the cell membrane. It carries out the reaction L-methionine(out) + ATP + H2O = L-methionine(in) + ADP + phosphate + H(+). The catalysed reaction is D-methionine(out) + ATP + H2O = D-methionine(in) + ADP + phosphate + H(+). In terms of biological role, part of the ABC transporter complex MetNIQ involved in methionine import. Responsible for energy coupling to the transport system. The protein is Methionine import ATP-binding protein MetN 2 of Bacillus cereus (strain ZK / E33L).